A 303-amino-acid polypeptide reads, in one-letter code: tRNA pseudouridine synthase B (303 aa).

The active-site Nucleophile is the Asp-38.

This sequence belongs to the pseudouridine synthase TruB family. Type 1 subfamily.

The enzyme catalyses uridine(55) in tRNA = pseudouridine(55) in tRNA. Its function is as follows. Responsible for synthesis of pseudouridine from uracil-55 in the psi GC loop of transfer RNAs. The polypeptide is tRNA pseudouridine synthase B (Oceanobacillus iheyensis (strain DSM 14371 / CIP 107618 / JCM 11309 / KCTC 3954 / HTE831)).